Here is a 444-residue protein sequence, read N- to C-terminus: Glutamyl-tRNA reductase (444 aa).

Substrate contacts are provided by residues 49–52 (TCNR), Ser-109, 114–116 (ETQ), and Gln-120. The active-site Nucleophile is Cys-50. 189 to 194 (GAGKMG) contacts NADP(+).

This sequence belongs to the glutamyl-tRNA reductase family. Homodimer.

The catalysed reaction is (S)-4-amino-5-oxopentanoate + tRNA(Glu) + NADP(+) = L-glutamyl-tRNA(Glu) + NADPH + H(+). It functions in the pathway porphyrin-containing compound metabolism; protoporphyrin-IX biosynthesis; 5-aminolevulinate from L-glutamyl-tRNA(Glu): step 1/2. In terms of biological role, catalyzes the NADPH-dependent reduction of glutamyl-tRNA(Glu) to glutamate 1-semialdehyde (GSA). This Bacillus cereus (strain ATCC 14579 / DSM 31 / CCUG 7414 / JCM 2152 / NBRC 15305 / NCIMB 9373 / NCTC 2599 / NRRL B-3711) protein is Glutamyl-tRNA reductase.